The following is a 124-amino-acid chain: uncharacterized protein (124 aa).

The first 23 residues, 1 to 23 (MHKLLKLLSITLIGLSVATGVQA), serve as a signal peptide directing secretion.

This sequence belongs to the cytochrome b562 family.

This is an uncharacterized protein from Pasteurella multocida (strain Pm70).